A 438-amino-acid polypeptide reads, in one-letter code: Tol-Pal system protein TolB (438 aa).

An N-terminal signal peptide occupies residues 1-36; that stretch reads MTPAFRRADLTGFLRTYGAALILLLAAMLAWQPAQA.

It belongs to the TolB family. As to quaternary structure, the Tol-Pal system is composed of five core proteins: the inner membrane proteins TolA, TolQ and TolR, the periplasmic protein TolB and the outer membrane protein Pal. They form a network linking the inner and outer membranes and the peptidoglycan layer.

The protein resides in the periplasm. Functionally, part of the Tol-Pal system, which plays a role in outer membrane invagination during cell division and is important for maintaining outer membrane integrity. This chain is Tol-Pal system protein TolB, found in Bordetella pertussis (strain Tohama I / ATCC BAA-589 / NCTC 13251).